The sequence spans 423 residues: Adenylosuccinate synthetase (423 aa).

GTP is bound by residues 12-18 (GDEGKGK) and 40-42 (GHT). D13 acts as the Proton acceptor in catalysis. The Mg(2+) site is built by D13 and G40. Residues 13 to 16 (DEGK), 38 to 41 (NAGH), T128, R142, Q223, T238, and R302 each bind IMP. H41 serves as the catalytic Proton donor. Substrate is bound at residue 298-304 (TTTGRPR). Residues R304, 330 to 332 (RLD), and 412 to 414 (CIG) each bind GTP.

The protein belongs to the adenylosuccinate synthetase family. As to quaternary structure, homodimer. Mg(2+) is required as a cofactor.

It is found in the cytoplasm. It catalyses the reaction IMP + L-aspartate + GTP = N(6)-(1,2-dicarboxyethyl)-AMP + GDP + phosphate + 2 H(+). The protein operates within purine metabolism; AMP biosynthesis via de novo pathway; AMP from IMP: step 1/2. Functionally, plays an important role in the de novo pathway of purine nucleotide biosynthesis. Catalyzes the first committed step in the biosynthesis of AMP from IMP. The sequence is that of Adenylosuccinate synthetase from Dehalococcoides mccartyi (strain ATCC BAA-2266 / KCTC 15142 / 195) (Dehalococcoides ethenogenes (strain 195)).